We begin with the raw amino-acid sequence, 346 residues long: Methylthioribose-1-phosphate isomerase (346 aa).

Substrate-binding positions include arginine 48–alanine 50, arginine 91, and glutamine 196. Aspartate 237 functions as the Proton donor in the catalytic mechanism. Asparagine 247–lysine 248 contacts substrate.

This sequence belongs to the eIF-2B alpha/beta/delta subunits family. MtnA subfamily.

It catalyses the reaction 5-(methylsulfanyl)-alpha-D-ribose 1-phosphate = 5-(methylsulfanyl)-D-ribulose 1-phosphate. The protein operates within amino-acid biosynthesis; L-methionine biosynthesis via salvage pathway; L-methionine from S-methyl-5-thio-alpha-D-ribose 1-phosphate: step 1/6. In terms of biological role, catalyzes the interconversion of methylthioribose-1-phosphate (MTR-1-P) into methylthioribulose-1-phosphate (MTRu-1-P). The polypeptide is Methylthioribose-1-phosphate isomerase (Thermosipho melanesiensis (strain DSM 12029 / CIP 104789 / BI429)).